A 200-amino-acid polypeptide reads, in one-letter code: Dephospho-CoA kinase (200 aa).

The DPCK domain occupies Thr4–Lys200. Ala12–Thr17 lines the ATP pocket.

This sequence belongs to the CoaE family.

Its subcellular location is the cytoplasm. The catalysed reaction is 3'-dephospho-CoA + ATP = ADP + CoA + H(+). It participates in cofactor biosynthesis; coenzyme A biosynthesis; CoA from (R)-pantothenate: step 5/5. Functionally, catalyzes the phosphorylation of the 3'-hydroxyl group of dephosphocoenzyme A to form coenzyme A. This is Dephospho-CoA kinase from Listeria monocytogenes serotype 4b (strain F2365).